A 276-amino-acid chain; its full sequence is uncharacterized protein (276 aa).

A run of 10 helical transmembrane segments spans residues 5–25 (IVLALTVTFWGLAFTAIKYSV), 31–51 (IAIASLRFAIANTLFAVIIIL), 63–83 (VFALGIFGVSVYHVFLNLGEV), 89–109 (VASVVISLAPIFVLILSAIFL), 119–139 (VGIIIAFLGVVVISEPSYANI), 142–162 (IALVMVSTVAAAIYTTFGKSL), 168–188 (PITLTSNAMVLGSIPLYPFLP), 200–220 (LIGSIVFLGIFSTFFGYLGWY), 231–251 (ASVFLLAIPVVSLLAGNILLA), and 253–273 (PLTLRTVAGSGLVLLGIYIVV). EamA domains are found at residues 12–133 (TFWG…VISE) and 150–274 (VAAA…IVVR).

Belongs to the EamA transporter family.

It localises to the cell membrane. This is an uncharacterized protein from Archaeoglobus fulgidus (strain ATCC 49558 / DSM 4304 / JCM 9628 / NBRC 100126 / VC-16).